Consider the following 476-residue polypeptide: Ribulose bisphosphate carboxylase large chain (476 aa).

Positions 1-2 are excised as a propeptide; the sequence is MS. Pro-3 carries the N-acetylproline modification. Lys-14 bears the N6,N6,N6-trimethyllysine mark. Residues Asn-123 and Thr-173 each coordinate substrate. The active-site Proton acceptor is the Lys-175. Position 177 (Lys-177) interacts with substrate. Residues Lys-201, Asp-203, and Glu-204 each coordinate Mg(2+). Lys-201 carries the post-translational modification N6-carboxylysine. His-294 acts as the Proton acceptor in catalysis. 3 residues coordinate substrate: Arg-295, His-327, and Ser-379.

This sequence belongs to the RuBisCO large chain family. Type I subfamily. As to quaternary structure, heterohexadecamer of 8 large chains and 8 small chains; disulfide-linked. The disulfide link is formed within the large subunit homodimers. The cofactor is Mg(2+). Post-translationally, the disulfide bond which can form in the large chain dimeric partners within the hexadecamer appears to be associated with oxidative stress and protein turnover.

It localises to the plastid. It is found in the chloroplast. It carries out the reaction 2 (2R)-3-phosphoglycerate + 2 H(+) = D-ribulose 1,5-bisphosphate + CO2 + H2O. The enzyme catalyses D-ribulose 1,5-bisphosphate + O2 = 2-phosphoglycolate + (2R)-3-phosphoglycerate + 2 H(+). Functionally, ruBisCO catalyzes two reactions: the carboxylation of D-ribulose 1,5-bisphosphate, the primary event in carbon dioxide fixation, as well as the oxidative fragmentation of the pentose substrate in the photorespiration process. Both reactions occur simultaneously and in competition at the same active site. This chain is Ribulose bisphosphate carboxylase large chain, found in Setaria italica (Foxtail millet).